A 114-amino-acid polypeptide reads, in one-letter code: Transmembrane protein 14DP (114 aa).

4 consecutive transmembrane segments (helical) span residues 8 to 28, 36 to 56, 63 to 80, and 83 to 103; these read LVPLHWFGFGYTALVVSGGIV, APSLAAGLLFGSLAGVGAYQL, VWDFLAATSVTFVGIMGM, and YYYGKFMPVGLIAGASLLMAA.

This sequence belongs to the TMEM14 family.

The protein localises to the membrane. The chain is Transmembrane protein 14DP (TMEM14DP) from Homo sapiens (Human).